Here is a 527-residue protein sequence, read N- to C-terminus: Putative ABC transporter peptide-binding protein BOV_A0352 (527 aa).

The N-terminal stretch at 1–23 is a signal peptide; it reads MRLRNFYSALALSAAVFAGPLYA.

It belongs to the bacterial solute-binding protein 5 family. As to quaternary structure, the complex is composed of two ATP-binding proteins (BOV_A0347 and BOV_A0348), two transmembrane proteins (BOV_A0350 and BOV_A0351) and a solute-binding protein (BOV_A0352).

The protein resides in the periplasm. Its function is as follows. Probably part of an ABC transporter complex that could be involved in peptide import. In Brucella ovis (strain ATCC 25840 / 63/290 / NCTC 10512), this protein is Putative ABC transporter peptide-binding protein BOV_A0352.